Here is a 92-residue protein sequence, read N- to C-terminus: Putative septation protein SpoVG (92 aa).

Belongs to the SpoVG family.

Functionally, could be involved in septation. This is Putative septation protein SpoVG from Clostridioides difficile (strain 630) (Peptoclostridium difficile).